The primary structure comprises 155 residues: Putative pre-16S rRNA nuclease (155 aa).

Belongs to the YqgF nuclease family.

The protein resides in the cytoplasm. Could be a nuclease involved in processing of the 5'-end of pre-16S rRNA. This is Putative pre-16S rRNA nuclease from Xanthomonas campestris pv. campestris (strain B100).